We begin with the raw amino-acid sequence, 171 residues long: Urease accessory protein UreE (171 aa).

A disordered region spans residues 143–171 (SGGHQHHHGHDHDHGHHGHDHDHHHPDHE). The span at 152–171 (HDHDHGHHGHDHDHHHPDHE) shows a compositional bias: basic and acidic residues.

The protein belongs to the UreE family.

It is found in the cytoplasm. Involved in urease metallocenter assembly. Binds nickel. Probably functions as a nickel donor during metallocenter assembly. This chain is Urease accessory protein UreE, found in Brucella abortus biovar 1 (strain 9-941).